A 357-amino-acid chain; its full sequence is UPF0324 membrane protein BMEI1914 (357 aa).

The next 11 helical transmembrane spans lie at 29–48 (NILP…MVLE), 58–77 (AWLE…RSLA), 90–112 (SAKL…SAVI), 117–136 (GLIF…SYGI), 149–171 (LVAC…VIGA), 181–203 (AFTA…LLGL), 210–232 (ILAG…VSLL), 242–261 (LVRV…ISGN), 268–290 (PGFF…LHSL), 300–322 (AIQY…GVDI), and 334–356 (LTAI…MLGV).

Belongs to the UPF0324 family.

It localises to the cell membrane. In Brucella melitensis biotype 1 (strain ATCC 23456 / CCUG 17765 / NCTC 10094 / 16M), this protein is UPF0324 membrane protein BMEI1914.